We begin with the raw amino-acid sequence, 215 residues long: ER lumen protein-retaining receptor A (215 aa).

Over 1–2 (MN) the chain is Lumenal. The chain crosses the membrane as a helical span at residues 3 to 21 (IFRFAGDMSHLISVLILLL). Residues 22–35 (KIYATKSCAGISLK) are Cytoplasmic-facing. Residues 36–53 (TQELYALVFLTRYLDLFT) form a helical membrane-spanning segment. Topologically, residues 54–61 (DYVSLYNS) are lumenal. The chain crosses the membrane as a helical span at residues 62-82 (IMKIVFIASSLAIVWCMRRHP). Residues 83 to 98 (LVRRSYDKDLDTFRHQ) are Cytoplasmic-facing. Residues 99-112 (YVVLACFVLGLILN) form a helical membrane-spanning segment. Residues 113-119 (EKFTVQE) lie on the Lumenal side of the membrane. Residues 120–139 (VFWAFSIYLEAVAILPQLVL) traverse the membrane as a helical segment. Residues 140-151 (LQRSGNVDNLTG) are Cytoplasmic-facing. A helical membrane pass occupies residues 152–170 (QYVVFLGAYRGLYIINWIY). The Lumenal segment spans residues 171–181 (RYFTEDHFTRW). The helical transmembrane segment at 182 to 202 (IACVSGLVQTALYADFFYYYY) threads the bilayer. Residues 203-215 (ISWKTNTKLKLPA) lie on the Cytoplasmic side of the membrane.

Belongs to the ERD2 family.

Its subcellular location is the endoplasmic reticulum membrane. In terms of biological role, required for the retention of luminal endoplasmic reticulum proteins. Determines the specificity of the luminal ER protein retention system. Also required for normal vesicular traffic through the Golgi. This receptor recognizes H-D-E-L. This Arabidopsis thaliana (Mouse-ear cress) protein is ER lumen protein-retaining receptor A (ERD2A).